Here is a 402-residue protein sequence, read N- to C-terminus: Acyl-[acyl-carrier-protein] desaturase 3, chloroplastic (402 aa).

2 disordered regions span residues M1–S25 and V38–L66. A chloroplast-targeting transit peptide spans M1–M32. Positions 139, 178, 181, 231, 264, and 267 each coordinate Fe cation.

Belongs to the fatty acid desaturase type 2 family. In terms of assembly, homodimer. It depends on Fe(2+) as a cofactor.

It localises to the plastid. The protein localises to the chloroplast. It functions in the pathway lipid metabolism; fatty acid metabolism. Functionally, introduces a cis double bond in the acyl chain of an acyl-[acyl-carrier protein]. This Oryza sativa subsp. indica (Rice) protein is Acyl-[acyl-carrier-protein] desaturase 3, chloroplastic.